A 354-amino-acid chain; its full sequence is Protein RecA (354 aa).

Residue 75-82 (GPESSGKT) coordinates ATP.

This sequence belongs to the RecA family.

The protein localises to the cytoplasm. Its function is as follows. Can catalyze the hydrolysis of ATP in the presence of single-stranded DNA, the ATP-dependent uptake of single-stranded DNA by duplex DNA, and the ATP-dependent hybridization of homologous single-stranded DNAs. It interacts with LexA causing its activation and leading to its autocatalytic cleavage. This Cupriavidus taiwanensis (strain DSM 17343 / BCRC 17206 / CCUG 44338 / CIP 107171 / LMG 19424 / R1) (Ralstonia taiwanensis (strain LMG 19424)) protein is Protein RecA.